The sequence spans 149 residues: MQVILMDKVVNLGNLGDVVKVKDGYARNFLIPTGRARRATQANMEAFAAQKAELERIAADKLADAQRRSEKLEGASVTISQKAGVDGRLFGSITNADIAEALQAQGHDVAKADVRLPDGPLKALGEYPVVLSLHSDVSANITVVVVGEQ.

The protein belongs to the bacterial ribosomal protein bL9 family.

In terms of biological role, binds to the 23S rRNA. The polypeptide is Large ribosomal subunit protein bL9 (Thiobacillus denitrificans (strain ATCC 25259 / T1)).